A 615-amino-acid polypeptide reads, in one-letter code: Vitamin B12 transporter BtuB (615 aa).

Residues 1 to 20 (MIKKVSLMTALSVTAFSGWA) form the signal peptide. A TonB box motif is present at residues 25–32 (DSLVVTAN). One can recognise a TBDR plug domain in the interval 37 to 151 (PANTVLAPTS…IGGVVNIITT (115 aa)). Cyanocob(III)alamin is bound by residues Ser-84, Asn-91, and 109–110 (VT). The 462-residue stretch at 154 to 615 (KDGTTLNAGV…EYTLSGSYTF (462 aa)) folds into the TBDR beta-barrel domain. Beta stranded transmembrane passes span 157 to 164 (TTLNAGVG), 168 to 177 (YQNYGGSTQQ), and 183 to 194 (TRVTLAGDYTYT). Residues Asp-198, Gln-210, Asp-212, and Asp-214 each contribute to the Ca(2+) site. A run of 2 beta stranded transmembrane segments spans residues 216–226 (YMNKTIYGALE) and 231–247 (DQWSGFVRGFGYSNRTA). Residues Tyr-248 and Asp-249 each coordinate Ca(2+). Residue Ala-250 participates in cyanocob(III)alamin binding. Asp-262 contacts Ca(2+). The next 17 membrane-spanning stretches (beta stranded) occupy residues 264–278 (RQLYSQTWDTGLRFN), 280–297 (GIFHSQLLSSYSHSKDYN), 310–326 (TLDEIKQYNVQWTNSVD), 329–338 (HGNVGAGVDW), 354–370 (TNLRNTGVYLTALQKFG), 372–382 (FTLEGAARSDD), 386–401 (FGRHGTWQSSAAWEFI), 404–418 (YRFIASYGTAYKAPN), 435–444 (ESKQWEGAFE), 450–459 (VSWRVSAYRN), 474–491 (YYNVGKARIKGVEATASF), 495–510 (PLTHTVGYDYVDARNA), 518–530 (RRAKQQVKYQLDT), 536–551 (DWSLTYHYLGTRYDTD), 559–573 (KVKMGGVSLWDLAVS), 586–597 (IANLFDKDYETV), and 603–615 (AGREYTLSGSYTF). Thr-310 provides a ligand contact to cyanocob(III)alamin. Arg-518 serves as a coordination point for cyanocob(III)alamin. A TonB C-terminal box motif is present at residues 598–615 (YGYETAGREYTLSGSYTF).

This sequence belongs to the TonB-dependent receptor family. BtuB (TC 1.B.14.3.1) subfamily.

Its subcellular location is the cell outer membrane. Its function is as follows. Involved in the active translocation of vitamin B12 (cyanocobalamin) across the outer membrane to the periplasmic space. It derives its energy for transport by interacting with the trans-periplasmic membrane protein TonB. The polypeptide is Vitamin B12 transporter BtuB (Enterobacter sp. (strain 638)).